The primary structure comprises 131 residues: UPF0102 protein CYA_0708 (131 aa).

It belongs to the UPF0102 family.

The sequence is that of UPF0102 protein CYA_0708 from Synechococcus sp. (strain JA-3-3Ab) (Cyanobacteria bacterium Yellowstone A-Prime).